A 294-amino-acid polypeptide reads, in one-letter code: Sulfotransferase 1E1 (294 aa).

A 3'-phosphoadenylyl sulfate-binding site is contributed by 47-52; sequence KSGTTW. 105-107 contributes to the substrate binding site; sequence KTH. The active-site Proton acceptor is His107. 3'-phosphoadenylyl sulfate-binding positions include Arg129, Ser137, Tyr192, 226 to 231, and 256 to 258; these read TSFQEM and RKG.

Belongs to the sulfotransferase 1 family. Homodimer. In terms of tissue distribution, liver, intestine and at lower level in the kidney.

It is found in the cytoplasm. The protein resides in the cytosol. The catalysed reaction is estrone + 3'-phosphoadenylyl sulfate = estrone 3-sulfate + adenosine 3',5'-bisphosphate + H(+). It catalyses the reaction (24S)-hydroxycholesterol + 3'-phosphoadenylyl sulfate = (24S)-hydroxycholesterol 3-sulfate + adenosine 3',5'-bisphosphate + H(+). It carries out the reaction 17beta-estradiol + 3'-phosphoadenylyl sulfate = 17beta-estradiol 3-sulfate + adenosine 3',5'-bisphosphate + H(+). The enzyme catalyses 3beta-hydroxyandrost-5-en-17-one + 3'-phosphoadenylyl sulfate = dehydroepiandrosterone 3-sulfate + adenosine 3',5'-bisphosphate + H(+). The catalysed reaction is 4-ethylphenol + 3'-phosphoadenylyl sulfate = 4-ethylphenyl sulfate + adenosine 3',5'-bisphosphate + H(+). With respect to regulation, inhibited by estradiol. In terms of biological role, sulfotransferase that utilizes 3'-phospho-5'-adenylyl sulfate (PAPS) as sulfonate donor to catalyze the sulfate conjugation of estradiol and estrone. Is a key enzyme in estrogen homeostasis, the sulfation of estrogens leads to their inactivation. Also sulfates dehydroepiandrosterone (DHEA), pregnenolone, (24S)-hydroxycholesterol and xenobiotic compounds like ethinylestradiol, equalenin, diethyl stilbesterol and 1-naphthol at significantly lower efficiency. Does not sulfonate cortisol, testosterone and dopamine. May play a role in gut microbiota-host metabolic interaction. O-sulfonates 4-ethylphenol (4-EP), a dietary tyrosine-derived metabolite produced by gut bacteria. The product 4-EPS crosses the blood-brain barrier and may negatively regulate oligodendrocyte maturation and myelination, affecting the functional connectivity of different brain regions associated with the limbic system. This chain is Sulfotransferase 1E1 (SULT1E1), found in Homo sapiens (Human).